A 607-amino-acid chain; its full sequence is UvrABC system protein C (607 aa).

In terms of domain architecture, GIY-YIG spans 15–94 (ENPGVYLMKN…IKRHRPYFNV (80 aa)). One can recognise a UVR domain in the interval 204-239 (DQVLKLLIRLMNEASARLDYETAALRRDQIASIKEV).

It belongs to the UvrC family. In terms of assembly, interacts with UvrB in an incision complex.

It localises to the cytoplasm. The UvrABC repair system catalyzes the recognition and processing of DNA lesions. UvrC both incises the 5' and 3' sides of the lesion. The N-terminal half is responsible for the 3' incision and the C-terminal half is responsible for the 5' incision. The sequence is that of UvrABC system protein C from Dehalococcoides mccartyi (strain ATCC BAA-2100 / JCM 16839 / KCTC 5957 / BAV1).